A 322-amino-acid chain; its full sequence is Glucokinase (322 aa).

An ATP-binding site is contributed by 10–15; sequence GDIGGT.

The protein belongs to the bacterial glucokinase family.

The protein localises to the cytoplasm. The enzyme catalyses D-glucose + ATP = D-glucose 6-phosphate + ADP + H(+). This Hahella chejuensis (strain KCTC 2396) protein is Glucokinase.